We begin with the raw amino-acid sequence, 228 residues long: Lipoprotein-releasing system ATP-binding protein LolD (228 aa).

Positions Leu5–Ala228 constitute an ABC transporter domain. Position 41-48 (Gly41–Ser48) interacts with ATP.

Belongs to the ABC transporter superfamily. Lipoprotein translocase (TC 3.A.1.125) family. The complex is composed of two ATP-binding proteins (LolD) and two transmembrane proteins (LolC and LolE).

It is found in the cell inner membrane. In terms of biological role, part of the ABC transporter complex LolCDE involved in the translocation of mature outer membrane-directed lipoproteins, from the inner membrane to the periplasmic chaperone, LolA. Responsible for the formation of the LolA-lipoprotein complex in an ATP-dependent manner. This chain is Lipoprotein-releasing system ATP-binding protein LolD, found in Vibrio cholerae serotype O1 (strain ATCC 39315 / El Tor Inaba N16961).